Reading from the N-terminus, the 664-residue chain is tRNA (carboxymethyluridine(34)-5-O)-methyltransferase ALKBH8 (664 aa).

The RRM domain maps to 43 to 120 (QSLVVANGGL…QKIILYLNFV (78 aa)). The Fe2OG dioxygenase domain maps to 220–337 (KPDQMTINQY…RTSFTFRKVR (118 aa)). 227–229 (NQY) is a 2-oxoglutarate binding site. Residues H238 and D240 each coordinate Fe cation. Position 242 (H242) interacts with Zn(2+). H292 provides a ligand contact to Fe cation. 2-oxoglutarate is bound by residues R328 and R334. Residues C341, C343, and C349 each contribute to the Zn(2+) site. The interval 411 to 664 (ADIGCGNGKY…GNWCVILQKA (254 aa)) is methyltransferase domain. Residues 516-575 (KYLKGNRNSQGKKEEMNSDTSVQRSLVEQMPDMGSRDSASSVPRINDSQEGGCNSRQVSN) form a disordered region. Residues 552–575 (DSASSVPRINDSQEGGCNSRQVSN) are compositionally biased toward polar residues.

This sequence belongs to the alkB family. In terms of assembly, interacts with TRMT112. Requires Fe(2+) as cofactor.

The protein localises to the cytoplasm. It localises to the nucleus. It catalyses the reaction 5-(carboxymethyl)uridine(34) in tRNA + S-adenosyl-L-methionine = 5-(2-methoxy-2-oxoethyl)uridine(34) in tRNA + S-adenosyl-L-homocysteine. Catalyzes the methylation of 5-carboxymethyl uridine to 5-methylcarboxymethyl uridine at the wobble position of the anticodon loop in tRNA via its methyltransferase domain. Catalyzes the last step in the formation of 5-methylcarboxymethyl uridine at the wobble position of the anticodon loop in target tRNA. Has a preference for tRNA(Arg) and tRNA(Glu), and does not bind tRNA(Lys). Binds tRNA and catalyzes the iron and alpha-ketoglutarate dependent hydroxylation of 5-methylcarboxymethyl uridine at the wobble position of the anticodon loop in tRNA via its dioxygenase domain, giving rise to 5-(S)-methoxycarbonylhydroxymethyluridine; has a preference for tRNA(Gly). Required for normal survival after DNA damage. May inhibit apoptosis and promote cell survival and angiogenesis. The chain is tRNA (carboxymethyluridine(34)-5-O)-methyltransferase ALKBH8 (ALKBH8) from Macaca fascicularis (Crab-eating macaque).